Reading from the N-terminus, the 100-residue chain is Large ribosomal subunit protein eL31 (100 aa).

This sequence belongs to the eukaryotic ribosomal protein eL31 family.

This is Large ribosomal subunit protein eL31 from Hyperthermus butylicus (strain DSM 5456 / JCM 9403 / PLM1-5).